We begin with the raw amino-acid sequence, 333 residues long: Flotillin-like protein FloA (333 aa).

Residues 9-29 form a helical membrane-spanning segment; sequence IVLIVGGIIFLILFFHYVPFF.

Belongs to the flotillin-like FloA family. In terms of assembly, homooligomerizes.

It localises to the cell membrane. It is found in the membrane raft. Found in functional membrane microdomains (FMM) that may be equivalent to eukaryotic membrane rafts. FMMs are highly dynamic and increase in number as cells age. Flotillins are thought to be important factors in membrane fluidity. In Bacteroides thetaiotaomicron (strain ATCC 29148 / DSM 2079 / JCM 5827 / CCUG 10774 / NCTC 10582 / VPI-5482 / E50), this protein is Flotillin-like protein FloA.